Here is a 211-residue protein sequence, read N- to C-terminus: Holliday junction branch migration complex subunit RuvA (211 aa).

Residues Met1–Lys63 are domain I. The domain II stretch occupies residues Asp64–Ala142. A flexible linker region spans residues Val143 to Ala157. The tract at residues Val158–Lys211 is domain III.

The protein belongs to the RuvA family. As to quaternary structure, homotetramer. Forms an RuvA(8)-RuvB(12)-Holliday junction (HJ) complex. HJ DNA is sandwiched between 2 RuvA tetramers; dsDNA enters through RuvA and exits via RuvB. An RuvB hexamer assembles on each DNA strand where it exits the tetramer. Each RuvB hexamer is contacted by two RuvA subunits (via domain III) on 2 adjacent RuvB subunits; this complex drives branch migration. In the full resolvosome a probable DNA-RuvA(4)-RuvB(12)-RuvC(2) complex forms which resolves the HJ.

It is found in the cytoplasm. In terms of biological role, the RuvA-RuvB-RuvC complex processes Holliday junction (HJ) DNA during genetic recombination and DNA repair, while the RuvA-RuvB complex plays an important role in the rescue of blocked DNA replication forks via replication fork reversal (RFR). RuvA specifically binds to HJ cruciform DNA, conferring on it an open structure. The RuvB hexamer acts as an ATP-dependent pump, pulling dsDNA into and through the RuvAB complex. HJ branch migration allows RuvC to scan DNA until it finds its consensus sequence, where it cleaves and resolves the cruciform DNA. This Corynebacterium jeikeium (strain K411) protein is Holliday junction branch migration complex subunit RuvA.